A 751-amino-acid polypeptide reads, in one-letter code: Probable alpha-galactosidase C (751 aa).

The signal sequence occupies residues Met1–Ala27. Asn49, Asn57, Asn162, Asn186, Asn194, Asn366, Asn433, Asn452, and Asn500 each carry an N-linked (GlcNAc...) asparagine glycan. Asp510 serves as the catalytic Nucleophile. Residue Asp572 is the Proton donor of the active site. N-linked (GlcNAc...) asparagine glycosylation occurs at Asn720.

This sequence belongs to the glycosyl hydrolase 36 family. As to quaternary structure, homotetramer. Requires Mg(2+) as cofactor. NAD(+) serves as cofactor.

It is found in the secreted. It catalyses the reaction Hydrolysis of terminal, non-reducing alpha-D-galactose residues in alpha-D-galactosides, including galactose oligosaccharides, galactomannans and galactolipids.. Functionally, hydrolyzes a variety of simple alpha-D-galactoside as well as more complex molecules such as oligosaccharides and polysaccharides. In Aspergillus oryzae (strain ATCC 42149 / RIB 40) (Yellow koji mold), this protein is Probable alpha-galactosidase C (aglC).